The chain runs to 371 residues: Enterobactin C-glucosyltransferase (371 aa).

The protein belongs to the glycosyltransferase 28 family.

Its subcellular location is the cytoplasm. It carries out the reaction enterobactin + UDP-alpha-D-glucose = monoglucosyl-enterobactin + UDP. The catalysed reaction is monoglucosyl-enterobactin + UDP-alpha-D-glucose = diglucosyl-enterobactin + UDP + H(+). It catalyses the reaction diglucosyl-enterobactin + UDP-alpha-D-glucose = triglucosyl-enterobactin + UDP + H(+). It participates in siderophore biosynthesis; enterobactin biosynthesis. Its function is as follows. Catalyzes the successive monoglucosylation, diglucosylation and triglucosylation of enterobactin (Ent). Transfers glucosyl groups from uridine-5'-diphosphoglucose (UDP-Glc) to C5 of one, two or three of the 2,3-dihydroxybenzoyl (DHB) units of Ent to yield monoglucosyl-C-Ent (MGE), diglucosyl-C-Ent (DGE) and triglucosyl-C-Ent (TGE). Glucosylation decreases the membrane affinity of Ent and increases the iron acquisition rate. This is Enterobactin C-glucosyltransferase from Escherichia coli O6:H1 (strain CFT073 / ATCC 700928 / UPEC).